The following is a 109-amino-acid chain: Aquaporin-2 (109 aa).

At 1–6 (SIAFSR) the chain is on the cytoplasmic side. Residues 7–27 (AVLAEFLATLLFVFFGLGSAL) form a helical membrane-spanning segment. Residues 28-35 (NWPQAMPS) are Extracellular-facing. The chain crosses the membrane as a helical span at residues 36-54 (VLQIAMAFGLAIGTLVQAL). At 55–59 (GHVSG) the chain is on the cytoplasmic side. An intramembrane region (discontinuously helical) is located at residues 60 to 69 (AHINPAVTVA). An NPA 1 motif is present at residues 63–65 (NPA). Residues 70–80 (CLVGCHVSFLR) lie on the Cytoplasmic side of the membrane. The helical transmembrane segment at 81-102 (AAFYVAAQLLGAVAGAALLHEI) threads the bilayer. Residues 103 to 109 (TPPDIRR) lie on the Extracellular side of the membrane.

This sequence belongs to the MIP/aquaporin (TC 1.A.8) family. In terms of assembly, homotetramer. Serine phosphorylation is necessary and sufficient for expression at the apical membrane. Endocytosis is not phosphorylation-dependent. In terms of processing, N-glycosylated.

The protein resides in the apical cell membrane. It is found in the basolateral cell membrane. Its subcellular location is the cell membrane. The protein localises to the cytoplasmic vesicle membrane. It localises to the golgi apparatus. The protein resides in the trans-Golgi network membrane. The enzyme catalyses H2O(in) = H2O(out). The catalysed reaction is glycerol(in) = glycerol(out). Its function is as follows. Forms a water-specific channel that provides the plasma membranes of renal collecting duct with high permeability to water, thereby permitting water to move in the direction of an osmotic gradient. Plays an essential role in renal water homeostasis. Could also be permeable to glycerol. The chain is Aquaporin-2 from Equus caballus (Horse).